Here is a 500-residue protein sequence, read N- to C-terminus: Lycopene beta cyclase, chloroplastic (500 aa).

The N-terminal 81 residues, 1 to 81, are a transit peptide targeting the chloroplast; it reads MDTLLKTPNN…ELPMYDPSKG (81 aa). Position 86–114 (86–114) interacts with NAD(+); sequence LAVVGGGPAGLAVAQQVSEAGLSVCSIDP.

It belongs to the lycopene cyclase family.

The protein resides in the plastid. Its subcellular location is the chloroplast. The catalysed reaction is a carotenoid psi-end group = a carotenoid beta-end derivative. Its pathway is carotenoid biosynthesis; beta-carotene biosynthesis. It participates in carotenoid biosynthesis; beta-zeacarotene biosynthesis. Its function is as follows. Catalyzes the double cyclization reaction which converts lycopene to beta-carotene and neurosporene to beta-zeacarotene. This chain is Lycopene beta cyclase, chloroplastic (LCY1), found in Solanum lycopersicum (Tomato).